The sequence spans 344 residues: Aromatic amino acid aminotransferase (344 aa).

Lys-213 bears the N6-(pyridoxal phosphate)lysine mark.

This sequence belongs to the class-II pyridoxal-phosphate-dependent aminotransferase family. In terms of assembly, homodimer. Requires pyridoxal 5'-phosphate as cofactor.

It catalyses the reaction an aromatic L-alpha-amino acid + 2-oxoglutarate = an aromatic oxo-acid + L-glutamate. In terms of biological role, aminotransferase that catalyzes the conversion of aromatic amino acids and 2-oxoglutarate into corresponding aromatic oxo acids and L-glutamate. This Corynebacterium diphtheriae (strain ATCC 700971 / NCTC 13129 / Biotype gravis) protein is Aromatic amino acid aminotransferase.